A 1503-amino-acid polypeptide reads, in one-letter code: DNA-directed RNA polymerase subunit beta' (1503 aa).

Zn(2+)-binding residues include Cys71, Cys73, Cys86, and Cys89. Mg(2+) is bound by residues Asp470, Asp472, and Asp474. 4 residues coordinate Zn(2+): Cys800, Cys874, Cys881, and Cys884.

This sequence belongs to the RNA polymerase beta' chain family. The RNAP catalytic core consists of 2 alpha, 1 beta, 1 beta' and 1 omega subunit. When a sigma factor is associated with the core the holoenzyme is formed, which can initiate transcription. It depends on Mg(2+) as a cofactor. Requires Zn(2+) as cofactor.

The catalysed reaction is RNA(n) + a ribonucleoside 5'-triphosphate = RNA(n+1) + diphosphate. DNA-dependent RNA polymerase catalyzes the transcription of DNA into RNA using the four ribonucleoside triphosphates as substrates. This chain is DNA-directed RNA polymerase subunit beta', found in Sulfurimonas denitrificans (strain ATCC 33889 / DSM 1251) (Thiomicrospira denitrificans (strain ATCC 33889 / DSM 1251)).